Consider the following 481-residue polypeptide: Argininosuccinate lyase (481 aa).

This sequence belongs to the lyase 1 family. Argininosuccinate lyase subfamily.

It is found in the cytoplasm. The catalysed reaction is 2-(N(omega)-L-arginino)succinate = fumarate + L-arginine. It functions in the pathway amino-acid biosynthesis; L-arginine biosynthesis; L-arginine from L-ornithine and carbamoyl phosphate: step 3/3. This Methanococcus maripaludis (strain C7 / ATCC BAA-1331) protein is Argininosuccinate lyase.